We begin with the raw amino-acid sequence, 119 residues long: Large ribosomal subunit protein uL18 (119 aa).

The protein belongs to the universal ribosomal protein uL18 family. As to quaternary structure, part of the 50S ribosomal subunit; part of the 5S rRNA/L5/L18/L25 subcomplex. Contacts the 5S and 23S rRNAs.

This is one of the proteins that bind and probably mediate the attachment of the 5S RNA into the large ribosomal subunit, where it forms part of the central protuberance. In Chlorobaculum tepidum (strain ATCC 49652 / DSM 12025 / NBRC 103806 / TLS) (Chlorobium tepidum), this protein is Large ribosomal subunit protein uL18.